The chain runs to 356 residues: tRNA-specific 2-thiouridylase MnmA 2 (356 aa).

Residues 8 to 15 (GMSGGVDS) and Met34 contribute to the ATP site. Cys103 functions as the Nucleophile in the catalytic mechanism. A disulfide bridge connects residues Cys103 and Cys199. Gly127 contacts ATP. The interaction with tRNA stretch occupies residues 149–151 (KDQ). Cys199 acts as the Cysteine persulfide intermediate in catalysis. Residues 305–306 (RY) are interaction with tRNA.

The protein belongs to the MnmA/TRMU family.

It localises to the cytoplasm. The enzyme catalyses S-sulfanyl-L-cysteinyl-[protein] + uridine(34) in tRNA + AH2 + ATP = 2-thiouridine(34) in tRNA + L-cysteinyl-[protein] + A + AMP + diphosphate + H(+). Its function is as follows. Catalyzes the 2-thiolation of uridine at the wobble position (U34) of tRNA, leading to the formation of s(2)U34. The polypeptide is tRNA-specific 2-thiouridylase MnmA 2 (Clostridium botulinum (strain Okra / Type B1)).